We begin with the raw amino-acid sequence, 352 residues long: UDP-3-O-acylglucosamine N-acyltransferase (352 aa).

His257 serves as the catalytic Proton acceptor.

It belongs to the transferase hexapeptide repeat family. LpxD subfamily. In terms of assembly, homotrimer.

It catalyses the reaction a UDP-3-O-[(3R)-3-hydroxyacyl]-alpha-D-glucosamine + a (3R)-hydroxyacyl-[ACP] = a UDP-2-N,3-O-bis[(3R)-3-hydroxyacyl]-alpha-D-glucosamine + holo-[ACP] + H(+). It functions in the pathway bacterial outer membrane biogenesis; LPS lipid A biosynthesis. Functionally, catalyzes the N-acylation of UDP-3-O-acylglucosamine using 3-hydroxyacyl-ACP as the acyl donor. Is involved in the biosynthesis of lipid A, a phosphorylated glycolipid that anchors the lipopolysaccharide to the outer membrane of the cell. This Methylobacterium nodulans (strain LMG 21967 / CNCM I-2342 / ORS 2060) protein is UDP-3-O-acylglucosamine N-acyltransferase.